The chain runs to 156 residues: Small ribosomal subunit protein uS7 (156 aa).

It belongs to the universal ribosomal protein uS7 family. Part of the 30S ribosomal subunit. Contacts proteins S9 and S11.

One of the primary rRNA binding proteins, it binds directly to 16S rRNA where it nucleates assembly of the head domain of the 30S subunit. Is located at the subunit interface close to the decoding center, probably blocks exit of the E-site tRNA. The protein is Small ribosomal subunit protein uS7 of Yersinia enterocolitica serotype O:8 / biotype 1B (strain NCTC 13174 / 8081).